The sequence spans 317 residues: tRNA pseudouridine synthase B (317 aa).

The active-site Nucleophile is the Asp47.

The protein belongs to the pseudouridine synthase TruB family. Type 1 subfamily.

The catalysed reaction is uridine(55) in tRNA = pseudouridine(55) in tRNA. Responsible for synthesis of pseudouridine from uracil-55 in the psi GC loop of transfer RNAs. This chain is tRNA pseudouridine synthase B, found in Shewanella denitrificans (strain OS217 / ATCC BAA-1090 / DSM 15013).